A 333-amino-acid polypeptide reads, in one-letter code: Phosphate acyltransferase (333 aa).

Belongs to the PlsX family. As to quaternary structure, homodimer. Probably interacts with PlsY.

It localises to the cytoplasm. The catalysed reaction is a fatty acyl-[ACP] + phosphate = an acyl phosphate + holo-[ACP]. It participates in lipid metabolism; phospholipid metabolism. In terms of biological role, catalyzes the reversible formation of acyl-phosphate (acyl-PO(4)) from acyl-[acyl-carrier-protein] (acyl-ACP). This enzyme utilizes acyl-ACP as fatty acyl donor, but not acyl-CoA. This Helicobacter hepaticus (strain ATCC 51449 / 3B1) protein is Phosphate acyltransferase.